Reading from the N-terminus, the 241-residue chain is Carboxy-S-adenosyl-L-methionine synthase (241 aa).

Residues Tyr38, 63-65, 88-89, 116-117, Asn131, and Arg198 each bind S-adenosyl-L-methionine; these read GCS, DN, and DI.

This sequence belongs to the class I-like SAM-binding methyltransferase superfamily. Cx-SAM synthase family. In terms of assembly, homodimer.

The enzyme catalyses prephenate + S-adenosyl-L-methionine = carboxy-S-adenosyl-L-methionine + 3-phenylpyruvate + H2O. Its function is as follows. Catalyzes the conversion of S-adenosyl-L-methionine (SAM) to carboxy-S-adenosyl-L-methionine (Cx-SAM). The polypeptide is Carboxy-S-adenosyl-L-methionine synthase (Pseudoalteromonas translucida (strain TAC 125)).